Reading from the N-terminus, the 140-residue chain is Large ribosomal subunit protein uL11 (140 aa).

It belongs to the universal ribosomal protein uL11 family. Part of the ribosomal stalk of the 50S ribosomal subunit. Interacts with L10 and the large rRNA to form the base of the stalk. L10 forms an elongated spine to which L12 dimers bind in a sequential fashion forming a multimeric L10(L12)X complex. In terms of processing, one or more lysine residues are methylated.

In terms of biological role, forms part of the ribosomal stalk which helps the ribosome interact with GTP-bound translation factors. This chain is Large ribosomal subunit protein uL11, found in Syntrophobacter fumaroxidans (strain DSM 10017 / MPOB).